Consider the following 78-residue polypeptide: Large ribosomal subunit protein bL28 (78 aa).

This sequence belongs to the bacterial ribosomal protein bL28 family.

This chain is Large ribosomal subunit protein bL28, found in Psychrobacter arcticus (strain DSM 17307 / VKM B-2377 / 273-4).